The primary structure comprises 382 residues: Mannitol-1-phosphate 5-dehydrogenase (382 aa).

Residue 4 to 15 (AVHFGAGNIGRG) coordinates NAD(+).

It belongs to the mannitol dehydrogenase family.

The enzyme catalyses D-mannitol 1-phosphate + NAD(+) = beta-D-fructose 6-phosphate + NADH + H(+). The sequence is that of Mannitol-1-phosphate 5-dehydrogenase from Vibrio vulnificus (strain CMCP6).